The primary structure comprises 260 residues: MAMQFYASPEQIMRDRSELARKGIARGRSAVVLSYAGGVLFVAENLSSALHKVGEIYDRIGFAAVGRYNEFENLRRAGVRMADLNGLSYDRRDVTGRALANSFAQTLGAIFTEQSKPFEVEICVAQVGVTAEDDELYRLTYDGSVNDEPGRMAMGGQAEAIAGALKSNHRSDMSLGDAVKVAVRALGSVGGEGGAARTIAADQLEVAILDRHRDGRTFRRVTGAALTALLDDGAAAASTDAPAAAADSADVEERPDSEAP.

A compositionally biased stretch (low complexity) spans 237–248; that stretch reads ASTDAPAAAADS. The segment at 237–260 is disordered; sequence ASTDAPAAAADSADVEERPDSEAP. Residues 251–260 are compositionally biased toward basic and acidic residues; the sequence is VEERPDSEAP.

This sequence belongs to the peptidase T1A family. As to quaternary structure, the 20S proteasome core is composed of 14 alpha and 14 beta subunits that assemble into four stacked heptameric rings, resulting in a barrel-shaped structure. The two inner rings, each composed of seven catalytic beta subunits, are sandwiched by two outer rings, each composed of seven alpha subunits. The catalytic chamber with the active sites is on the inside of the barrel. Has a gated structure, the ends of the cylinder being occluded by the N-termini of the alpha-subunits. Is capped by the proteasome-associated ATPase, ARC.

The protein resides in the cytoplasm. It participates in protein degradation; proteasomal Pup-dependent pathway. With respect to regulation, the formation of the proteasomal ATPase ARC-20S proteasome complex, likely via the docking of the C-termini of ARC into the intersubunit pockets in the alpha-rings, may trigger opening of the gate for substrate entry. Interconversion between the open-gate and close-gate conformations leads to a dynamic regulation of the 20S proteasome proteolysis activity. Functionally, component of the proteasome core, a large protease complex with broad specificity involved in protein degradation. This Salinispora tropica (strain ATCC BAA-916 / DSM 44818 / JCM 13857 / NBRC 105044 / CNB-440) protein is Proteasome subunit alpha.